A 194-amino-acid polypeptide reads, in one-letter code: Xanthine phosphoribosyltransferase (194 aa).

2 residues coordinate xanthine: Leu-20 and Asn-27. 128-132 (ANGQA) contacts 5-phospho-alpha-D-ribose 1-diphosphate. Lys-156 is a binding site for xanthine.

This sequence belongs to the purine/pyrimidine phosphoribosyltransferase family. Xpt subfamily. In terms of assembly, homodimer.

The protein localises to the cytoplasm. It carries out the reaction XMP + diphosphate = xanthine + 5-phospho-alpha-D-ribose 1-diphosphate. The protein operates within purine metabolism; XMP biosynthesis via salvage pathway; XMP from xanthine: step 1/1. In terms of biological role, converts the preformed base xanthine, a product of nucleic acid breakdown, to xanthosine 5'-monophosphate (XMP), so it can be reused for RNA or DNA synthesis. The polypeptide is Xanthine phosphoribosyltransferase (Geobacillus thermodenitrificans (strain NG80-2)).